Consider the following 1374-residue polypeptide: Probable ATP-dependent RNA helicase spindle-E (1374 aa).

The Helicase ATP-binding domain maps to 46 to 212 (LARIRENPVI…FKTPKKVGYL (167 aa)). An ATP-binding site is contributed by 59-66 (GPTGCGKT). The DEAH box signature appears at 158–161 (DEIH). The 183-residue stretch at 265 to 447 (VCDRLIENMH…NVILKAKLLE (183 aa)) folds into the Helicase C-terminal domain. The Tudor domain occupies 866 to 931 (QFAVGQMVAA…RKLDGPLAYM (66 aa)).

The protein belongs to the DEAD box helicase family. DEAH subfamily.

It localises to the cytoplasm. The catalysed reaction is ATP + H2O = ADP + phosphate + H(+). Its function is as follows. Probable ATP-binding RNA helicase which plays a central role during gametogenesis by repressing transposable elements and preventing their mobilization, which is essential for the germline integrity. Acts via the piRNA metabolic process, which mediates the repression of transposable elements during meiosis by forming complexes composed of piRNAs and Piwi proteins and govern the methylation and subsequent repression of transposons. This is Probable ATP-dependent RNA helicase spindle-E (spn-E) from Aedes aegypti (Yellowfever mosquito).